Here is a 361-residue protein sequence, read N- to C-terminus: Phospho-N-acetylmuramoyl-pentapeptide-transferase (361 aa).

Transmembrane regions (helical) follow at residues 17–37, 66–86, 90–110, 129–149, 162–182, 197–217, 232–252, 261–281, 286–306, and 340–360; these read SIYLRAFLGFVISFCIVLFAG, GTPTMGGVLIIAAVLLTSIFI, TNSLILLVLLSTIMFAAIGFI, LLFQGAIGLIIWAYIYFIGLT, ISAYPYYIGAIGLFFLIQIVL, GLAIMPMIICSTILGVIAYFT, VGSGELSVFLSAVTGAGLGFL, IFMGDTGSLTLGGILGVIAII, LMLPIMGFIFVLEALSVILQV, and FWIGTLIFGIIALGAIKMRGI.

Belongs to the glycosyltransferase 4 family. MraY subfamily. It depends on Mg(2+) as a cofactor.

The protein localises to the cell inner membrane. The catalysed reaction is UDP-N-acetyl-alpha-D-muramoyl-L-alanyl-gamma-D-glutamyl-meso-2,6-diaminopimeloyl-D-alanyl-D-alanine + di-trans,octa-cis-undecaprenyl phosphate = di-trans,octa-cis-undecaprenyl diphospho-N-acetyl-alpha-D-muramoyl-L-alanyl-D-glutamyl-meso-2,6-diaminopimeloyl-D-alanyl-D-alanine + UMP. The protein operates within cell wall biogenesis; peptidoglycan biosynthesis. Its function is as follows. Catalyzes the initial step of the lipid cycle reactions in the biosynthesis of the cell wall peptidoglycan: transfers peptidoglycan precursor phospho-MurNAc-pentapeptide from UDP-MurNAc-pentapeptide onto the lipid carrier undecaprenyl phosphate, yielding undecaprenyl-pyrophosphoryl-MurNAc-pentapeptide, known as lipid I. This is Phospho-N-acetylmuramoyl-pentapeptide-transferase from Fusobacterium nucleatum subsp. nucleatum (strain ATCC 25586 / DSM 15643 / BCRC 10681 / CIP 101130 / JCM 8532 / KCTC 2640 / LMG 13131 / VPI 4355).